The chain runs to 201 residues: 3-isopropylmalate dehydratase small subunit (201 aa).

Belongs to the LeuD family. LeuD type 1 subfamily. As to quaternary structure, heterodimer of LeuC and LeuD.

The catalysed reaction is (2R,3S)-3-isopropylmalate = (2S)-2-isopropylmalate. The protein operates within amino-acid biosynthesis; L-leucine biosynthesis; L-leucine from 3-methyl-2-oxobutanoate: step 2/4. Catalyzes the isomerization between 2-isopropylmalate and 3-isopropylmalate, via the formation of 2-isopropylmaleate. The polypeptide is 3-isopropylmalate dehydratase small subunit (Cereibacter sphaeroides (strain ATCC 17029 / ATH 2.4.9) (Rhodobacter sphaeroides)).